We begin with the raw amino-acid sequence, 210 residues long: uncharacterized protein (210 aa).

Phosphoserine is present on residues serine 18, serine 39, serine 41, serine 57, and serine 60. The span at leucine 33–alanine 46 shows a compositional bias: polar residues. Residues leucine 33–glycine 58 are disordered. Disordered regions lie at residues tyrosine 100 to serine 139 and aspartate 177 to threonine 210. The segment covering histidine 102–methionine 116 has biased composition (polar residues). A compositionally biased stretch (basic and acidic residues) spans asparagine 130–serine 139. Phosphoserine is present on residues serine 178, serine 189, and serine 192. Over residues histidine 191–threonine 210 the composition is skewed to polar residues.

This is an uncharacterized protein from Saccharomyces cerevisiae (strain ATCC 204508 / S288c) (Baker's yeast).